Reading from the N-terminus, the 240-residue chain is Transcription factor bHLH101 (240 aa).

The bHLH domain maps to 65–117; sequence EKKLNHNASERDRRRKLNALYSSLRALLPLSDQKRKLSIPMTVARVVKYIPEQ.

Homodimer. As to expression, flowers.

Its subcellular location is the nucleus. This is Transcription factor bHLH101 (BHLH101) from Arabidopsis thaliana (Mouse-ear cress).